The sequence spans 103 residues: Large ribosomal subunit protein bL21 (103 aa).

The protein belongs to the bacterial ribosomal protein bL21 family. In terms of assembly, part of the 50S ribosomal subunit. Contacts protein L20.

Its function is as follows. This protein binds to 23S rRNA in the presence of protein L20. The chain is Large ribosomal subunit protein bL21 from Shewanella piezotolerans (strain WP3 / JCM 13877).